Here is a 323-residue protein sequence, read N- to C-terminus: Putative HTH-type transcriptional regulatory protein Mbur_1811 (323 aa).

The region spanning Leu-132 to Leu-190 is the HTH cro/C1-type domain. Residues Leu-143–Glu-162 constitute a DNA-binding region (H-T-H motif).

In Methanococcoides burtonii (strain DSM 6242 / NBRC 107633 / OCM 468 / ACE-M), this protein is Putative HTH-type transcriptional regulatory protein Mbur_1811.